Reading from the N-terminus, the 388-residue chain is Angiopoietin-related protein 5 (388 aa).

An N-terminal signal peptide occupies residues 1 to 25; that stretch reads MMSPSQASLLFLNVCIFICGEAVQG. Residue Asn53 is glycosylated (N-linked (GlcNAc...) asparagine). The stretch at 98-123 forms a coiled coil; the sequence is LRNMMDEQQASLDYLSNQVNELMNRV. Positions 141–383 constitute a Fibrinogen C-terminal domain; the sequence is RPVQSHGLDC…SVSMKIRRMY (243 aa). An N-linked (GlcNAc...) asparagine glycan is attached at Asn238. 2 cysteine pairs are disulfide-bonded: Cys310-Cys314 and Cys324-Cys338. The N-linked (GlcNAc...) asparagine glycan is linked to Asn329.

As to expression, mainly expressed in adult heart.

It is found in the secreted. This chain is Angiopoietin-related protein 5 (ANGPTL5), found in Homo sapiens (Human).